Reading from the N-terminus, the 265-residue chain is MGLRIHFVVDPHGWCCMGLIVFVWLYNIVLIPKIVLFPHYEEGHIPGILIIIFYGISIFCLVALVRASITDPGRLPENPKIPHGEREFWELCNKCNLMRPKRSHHCSRCGHCVRRMDHHCPWINNCVGEDNHWLFLQLCFYTELLTCYALMFSFCHYYYFLPLKKRNLDLFVFRHELAIMRLAAFMGITMLVGITGLFYTQLIGIITDTTSIEKMSNCCEDISRPRKPWQQTFSEVFGTRWKILWFIPFRQRQPLRVPYHFANHV.

The Cytoplasmic segment spans residues 1–16 (MGLRIHFVVDPHGWCC). Residues 17–37 (MGLIVFVWLYNIVLIPKIVLF) traverse the membrane as a helical segment. The Extracellular segment spans residues 38-44 (PHYEEGH). The chain crosses the membrane as a helical span at residues 45-65 (IPGILIIIFYGISIFCLVALV). Residues 66-133 (RASITDPGRL…NNCVGEDNHW (68 aa)) lie on the Cytoplasmic side of the membrane. Residues 90–140 (ELCNKCNLMRPKRSHHCSRCGHCVRRMDHHCPWINNCVGEDNHWLFLQLCF) enclose the DHHC domain. The S-palmitoyl cysteine intermediate role is filled by C120. The helical transmembrane segment at 134–154 (LFLQLCFYTELLTCYALMFSF) threads the bilayer. Residues 155–185 (CHYYYFLPLKKRNLDLFVFRHELAIMRLAAF) lie on the Extracellular side of the membrane. A helical transmembrane segment spans residues 186–206 (MGITMLVGITGLFYTQLIGII). Over 207-265 (TDTTSIEKMSNCCEDISRPRKPWQQTFSEVFGTRWKILWFIPFRQRQPLRVPYHFANHV) the chain is Cytoplasmic.

The protein belongs to the DHHC palmitoyltransferase family. In terms of tissue distribution, widely expressed.

The protein localises to the golgi apparatus membrane. The protein resides in the golgi apparatus. Its subcellular location is the cis-Golgi network membrane. It is found in the cell membrane. The enzyme catalyses L-cysteinyl-[protein] + hexadecanoyl-CoA = S-hexadecanoyl-L-cysteinyl-[protein] + CoA. Functionally, palmitoyltransferase that catalyzes the addition of palmitate onto various protein substrates. Palmitoylates sex steroid hormone receptors, including ESR1, PGR and AR, thereby regulating their targeting to the plasma membrane. This affects rapid intracellular signaling by sex hormones via ERK and AKT kinases and the generation of cAMP, but does not affect that mediated by their nuclear receptor. Palmitoylates FYN, regulates its localization in hair follicles and plays a key role in epidermal homeostasis and hair follicle differentiation. Through the palmitoylation of PLCB1 and the regulation of PLCB1 downstream signaling may indirectly regulate the function of the endothelial barrier and the adhesion of leukocytes to the endothelium. Also has a palmitoyltransferase activity toward ADRA1D, positively regulating its activity and expression and may thereby play a role in vascular contraction. May also palmitoylate eNOS and LCK. The polypeptide is Palmitoyltransferase ZDHHC21 (Homo sapiens (Human)).